The following is a 577-amino-acid chain: Glucose-6-phosphate 1-dehydrogenase, chloroplastic (577 aa).

A disordered region spans residues 1–20 (MGVQLRLNPCSSSSAATSPS). A chloroplast-targeting transit peptide spans 1–63 (MGVQLRLNPC…QPRKHFEVFS (63 aa)). Over residues 11 to 20 (SSSSAATSPS) the composition is skewed to low complexity. NADP(+)-binding positions include 97–104 (GASGDLAK) and arginine 131. A disulfide bridge connects residues cysteine 149 and cysteine 157. Lysine 234 contributes to the NADP(+) binding site. D-glucose 6-phosphate contacts are provided by residues lysine 234, 264-268 (HYLGK), glutamate 302, and aspartate 321. Histidine 326 serves as the catalytic Proton acceptor. An NADP(+)-binding site is contributed by lysine 419. Lysine 422 and lysine 427 together coordinate D-glucose 6-phosphate. Positions 428, 432, and 461 each coordinate NADP(+). Glutamine 463 provides a ligand contact to D-glucose 6-phosphate. NADP(+)-binding positions include 469-471 (YLK) and arginine 554.

Belongs to the glucose-6-phosphate dehydrogenase family. In terms of assembly, homodimer. As to expression, green tissues, leaves and chloroplasts.

The protein resides in the plastid. It localises to the chloroplast. The catalysed reaction is D-glucose 6-phosphate + NADP(+) = 6-phospho-D-glucono-1,5-lactone + NADPH + H(+). Its pathway is carbohydrate degradation; pentose phosphate pathway; D-ribulose 5-phosphate from D-glucose 6-phosphate (oxidative stage): step 1/3. Regulated by metabolites. Post-translationally inactivated by cysteine-mediated redox modification via the ferredoxin-thioredoxin system in the light and this avoids futile cycles with photosynthetic CO2 fixation. In terms of biological role, catalyzes the rate-limiting step of the oxidative pentose-phosphate pathway, which represents a route for the dissimilation of carbohydrates besides glycolysis. The main function of this enzyme is to provide reducing power (NADPH) and pentose phosphates for fatty acid and nucleic acid synthesis which are involved in membrane synthesis and cell division. The protein is Glucose-6-phosphate 1-dehydrogenase, chloroplastic of Solanum tuberosum (Potato).